The sequence spans 225 residues: Testis-expressed protein 30 (225 aa).

In Mus musculus (Mouse), this protein is Testis-expressed protein 30 (Tex30).